A 400-amino-acid polypeptide reads, in one-letter code: 3-phenylpropionate/cinnamic acid dioxygenase ferredoxin--NAD(+) reductase component (400 aa).

An FAD-binding site is contributed by 5-36; that stretch reads TIIIVGGGQAAAMAAASLRQQGFTGELHLFSD. Position 146 to 174 (146 to 174) interacts with NAD(+); that stretch reads SVVIVGAGTIGLELAASATQRRCKVTVIE.

It belongs to the bacterial ring-hydroxylating dioxygenase ferredoxin reductase family. In terms of assembly, this dioxygenase system consists of four proteins: the two subunits of the hydroxylase component (HcaE and HcaF), a ferredoxin (HcaC) and a ferredoxin reductase (HcaD). FAD is required as a cofactor.

It carries out the reaction 2 reduced [2Fe-2S]-[ferredoxin] + NAD(+) + H(+) = 2 oxidized [2Fe-2S]-[ferredoxin] + NADH. It participates in aromatic compound metabolism; 3-phenylpropanoate degradation. Part of the multicomponent 3-phenylpropionate dioxygenase, that converts 3-phenylpropionic acid (PP) and cinnamic acid (CI) into 3-phenylpropionate-dihydrodiol (PP-dihydrodiol) and cinnamic acid-dihydrodiol (CI-dihydrodiol), respectively. This is 3-phenylpropionate/cinnamic acid dioxygenase ferredoxin--NAD(+) reductase component from Escherichia coli (strain 55989 / EAEC).